We begin with the raw amino-acid sequence, 258 residues long: Imidazole glycerol phosphate synthase subunit HisF (258 aa).

Residues D11 and D130 contribute to the active site.

Belongs to the HisA/HisF family. As to quaternary structure, heterodimer of HisH and HisF.

It localises to the cytoplasm. It carries out the reaction 5-[(5-phospho-1-deoxy-D-ribulos-1-ylimino)methylamino]-1-(5-phospho-beta-D-ribosyl)imidazole-4-carboxamide + L-glutamine = D-erythro-1-(imidazol-4-yl)glycerol 3-phosphate + 5-amino-1-(5-phospho-beta-D-ribosyl)imidazole-4-carboxamide + L-glutamate + H(+). Its pathway is amino-acid biosynthesis; L-histidine biosynthesis; L-histidine from 5-phospho-alpha-D-ribose 1-diphosphate: step 5/9. In terms of biological role, IGPS catalyzes the conversion of PRFAR and glutamine to IGP, AICAR and glutamate. The HisF subunit catalyzes the cyclization activity that produces IGP and AICAR from PRFAR using the ammonia provided by the HisH subunit. The sequence is that of Imidazole glycerol phosphate synthase subunit HisF from Edwardsiella ictaluri (strain 93-146).